The following is a 385-amino-acid chain: 8-amino-7-oxononanoate synthase (385 aa).

Residue Arg-27 participates in substrate binding. 105 to 106 (GY) is a pyridoxal 5'-phosphate binding site. Residue His-130 coordinates substrate. Pyridoxal 5'-phosphate contacts are provided by residues Ser-176, 201–204 (DEAH), and 232–235 (TMSK). An N6-(pyridoxal phosphate)lysine modification is found at Lys-235. Thr-345 provides a ligand contact to substrate.

This sequence belongs to the class-II pyridoxal-phosphate-dependent aminotransferase family. BioF subfamily. As to quaternary structure, homodimer. Requires pyridoxal 5'-phosphate as cofactor.

It catalyses the reaction 6-carboxyhexanoyl-[ACP] + L-alanine + H(+) = (8S)-8-amino-7-oxononanoate + holo-[ACP] + CO2. The protein operates within cofactor biosynthesis; biotin biosynthesis. In terms of biological role, catalyzes the decarboxylative condensation of pimeloyl-[acyl-carrier protein] and L-alanine to produce 8-amino-7-oxononanoate (AON), [acyl-carrier protein], and carbon dioxide. The polypeptide is 8-amino-7-oxononanoate synthase (Mycobacterium leprae (strain Br4923)).